The primary structure comprises 353 residues: DNA polymerase IV (353 aa).

A UmuC domain is found at 4 to 185; the sequence is IIHVDMDCFF…LPLSKIPGVG (182 aa). Positions 8 and 103 each coordinate Mg(2+). Glu104 is a catalytic residue.

It belongs to the DNA polymerase type-Y family. Monomer. Mg(2+) serves as cofactor.

The protein resides in the cytoplasm. The enzyme catalyses DNA(n) + a 2'-deoxyribonucleoside 5'-triphosphate = DNA(n+1) + diphosphate. Its function is as follows. Poorly processive, error-prone DNA polymerase involved in untargeted mutagenesis. Copies undamaged DNA at stalled replication forks, which arise in vivo from mismatched or misaligned primer ends. These misaligned primers can be extended by PolIV. Exhibits no 3'-5' exonuclease (proofreading) activity. May be involved in translesional synthesis, in conjunction with the beta clamp from PolIII. This chain is DNA polymerase IV, found in Serratia proteamaculans (strain 568).